The sequence spans 400 residues: Coiled-coil domain-containing glutamate-rich protein 1 (400 aa).

Residues 1–11 (MTQTVNEREDP) show a composition bias toward basic and acidic residues. Disordered regions lie at residues 1-68 (MTQT…IPGP), 134-164 (RPPG…PPID), and 203-353 (QEKL…DKFL). Residues 31-45 (YHRRQRGAPMSKRRY) show a composition bias toward basic residues. Basic and acidic residues predominate over residues 46–57 (RDGPKTEYEAPR). Positions 137–157 (GRKKRWGRRGRGLRRHPRRSF) are enriched in basic residues. Positions 209–220 (QQAALRAHQAQA) are enriched in low complexity. Residues 255-271 (PSLTFSPAPGQQNQSPT) show a composition bias toward polar residues. The span at 275 to 347 (VEEEEKNVDD…EAGLEEGEQR (73 aa)) shows a compositional bias: acidic residues. A coiled-coil region spans residues 299 to 335 (EEEEVDGESEDEDVDEEEVEEAGNGEEREEDQEEEDV).

The protein resides in the nucleus. In terms of biological role, regulator of histone epigenetic modifications and chromatin compaction into the sperm head, required for histone-to-protamine (HTP) transition. HTP is a key event in which somatic histones are first replaced by testis-specific histone variants, then transition proteins (TNPs) are incorporated into the spermatid nucleus, and finally protamines (PRMs) replace the TNPs to promote chromatin condensation. This is Coiled-coil domain-containing glutamate-rich protein 1 (Ccer1) from Rattus norvegicus (Rat).